The primary structure comprises 377 residues: Nitric oxide reductase FlRd-NAD(+) reductase (377 aa).

The protein belongs to the FAD-dependent oxidoreductase family. FAD serves as cofactor.

It is found in the cytoplasm. The enzyme catalyses 2 reduced [nitric oxide reductase rubredoxin domain] + NAD(+) + H(+) = 2 oxidized [nitric oxide reductase rubredoxin domain] + NADH. Its pathway is nitrogen metabolism; nitric oxide reduction. Its function is as follows. One of at least two accessory proteins for anaerobic nitric oxide (NO) reductase. Reduces the rubredoxin moiety of NO reductase. This Salmonella enteritidis PT4 (strain P125109) protein is Nitric oxide reductase FlRd-NAD(+) reductase.